The chain runs to 1288 residues: Contactin-associated protein-like 3B (1288 aa).

The first 25 residues, 1–25 (MASVAWAVLKVLLLLPTQTWSPVGA), serve as a signal peptide directing secretion. Residues 23 to 61 (VGAGNPPDCDSPLASALPRSSFSSSSELSSSHGPGFSRL) are disordered. The Extracellular segment spans residues 26 to 1245 (GNPPDCDSPL…LVNADRRDSA (1220 aa)). One can recognise an F5/8 type C domain in the interval 31-177 (CDSPLASALP…IGMRIEVYGC (147 aa)). Intrachain disulfides connect Cys-31/Cys-177, Cys-332/Cys-364, Cys-513/Cys-545, Cys-551/Cys-562, Cys-556/Cys-571, and Cys-573/Cys-583. The segment covering 33 to 59 (SPLASALPRSSFSSSSELSSSHGPGFS) has biased composition (low complexity). 2 consecutive Laminin G-like domains span residues 183 to 364 (VVYF…SFSC) and 370 to 545 (VPVT…IDSC). Asn-359 carries N-linked (GlcNAc...) asparagine glycosylation. Residues 547–584 (ITDRCLPSYCEHGGECSQSWDTFSCDCLGTGYTGETCH) form the EGF-like 1 domain. The Fibrinogen C-terminal domain maps to 585–792 (SSLYEQSCEA…LLCRGDKSFW (208 aa)). Asn-706 is a glycosylation site (N-linked (GlcNAc...) asparagine). Residues 793–958 (NSASFNTETS…TVTPGVEPGC (166 aa)) enclose the Laminin G-like 3 domain. 5 disulfides stabilise this stretch: Cys-931–Cys-958, Cys-962–Cys-975, Cys-969–Cys-984, Cys-986–Cys-996, and Cys-1167–Cys-1203. The region spanning 959–997 (AGHCSTYGHLCRNGGRCREKRRGVTCDCAFSAYDGPFCS) is the EGF-like 2 domain. Residues 1016–1203 (EHYTLSENSS…RGHVAPMARC (188 aa)) form the Laminin G-like 4 domain. Residues 1215–1236 (ELAPRLAGGAGRSGPVDEGEPL) are disordered. The chain crosses the membrane as a helical span at residues 1246–1266 (VIGGVIAVEIFILLCITAIAI). Residues 1267–1288 (RIYQQRKLRKENESKVSKKEEC) are Cytoplasmic-facing.

The protein belongs to the neurexin family.

Its subcellular location is the membrane. The sequence is that of Contactin-associated protein-like 3B (CNTNAP3B) from Homo sapiens (Human).